Reading from the N-terminus, the 174-residue chain is Adipose-secreted signaling protein (174 aa).

Position 2 is an N-acetylalanine (Ala2). Position 147 is a phosphothreonine (Thr147).

Belongs to the ADISSP family. As to expression, expression is adipose-specific and highly brown adipose tissue-enriched.

The protein resides in the secreted. Functionally, adipocyte-secreted protein (adipokine) that acts as a key regulator for white adipose tissue (WAT) thermogenesis and glucose homeostasis at least in part through activation of protein kinase A (PKA). The polypeptide is Adipose-secreted signaling protein (Mus musculus (Mouse)).